Reading from the N-terminus, the 1643-residue chain is Lysine-specific demethylase 6B (1643 aa).

4 disordered regions span residues 52-88 (GQPPLPAPLPPSHGSSSGHPSKPYYAPGAPTPRPLHG), 190-680 (AKRG…PLED), 704-807 (ESIR…LKSL), and 822-1096 (GAAV…RSLS). Low complexity-rich tracts occupy residues 63–74 (SHGSSSGHPSKP) and 212–223 (AALSGPSGEEGL). Ser224 is modified (phosphoserine). The span at 242 to 266 (PGLPLPPPPLPPPPPPPPPPPPPLP) shows a compositional bias: pro residues. Positions 291–307 (GPERKGSAPPERQEQRH) are enriched in basic and acidic residues. Pro residues predominate over residues 332 to 342 (AAPPGPGPRPP). Basic and acidic residues predominate over residues 359-370 (DLRESRVQRSRM). A compositionally biased stretch (low complexity) spans 394–412 (PGTTTSSSSSSSSNTGLRG). The span at 460–484 (SLPPGPSSPPPPPCPRLLRPPPPPA) shows a compositional bias: pro residues. Low complexity predominate over residues 550 to 569 (TTSSSNSNSGSHSSSPAGPV). Composition is skewed to pro residues over residues 584-600 (LPRPPSPAQNPQDPPLV) and 641-658 (GPGPPPGPLSKAPQPVPP). The span at 704–714 (ESIRKEEEQQQ) shows a compositional bias: basic and acidic residues. Positions 740 to 764 (TAPTTTAPAVAVTTTTTTTTTTTAT) are enriched in low complexity. Residues 772–800 (PPALPPPPPLAKFPPPSQPQPPPPPPPSP) show a composition bias toward pro residues. Residues 843–877 (SGATALPPTSAAPSAQGSPQPSASSSSQFSTSGGP) are compositionally biased toward low complexity. The segment covering 889-904 (VPGPMTPTQPPPPLSL) has biased composition (pro residues). Over residues 916-929 (EISRACETLVERVG) the composition is skewed to basic and acidic residues. The segment covering 972 to 989 (CKRRQKEHQKEHRRHRRA) has biased composition (basic residues). The span at 990 to 1003 (CKDSVGRRPREGRA) shows a compositional bias: basic and acidic residues. Basic residues predominate over residues 1004 to 1016 (KAKAKVPKEKSRR). Over residues 1047–1067 (PTAPAPPSAPAPSAQPTPPSA) the composition is skewed to pro residues. A Glycyl lysine isopeptide (Lys-Gly) (interchain with G-Cter in SUMO2) cross-link involves residue Lys1109. Positions 1288–1325 (FQESLQEEKESEDEESEEPDSTTGTPPSSAPDPKNHHI) are disordered. Residues 1296–1307 (KESEDEESEEPD) are compositionally biased toward acidic residues. The 164-residue stretch at 1339-1502 (RWKPQLQELL…YQLALERYEW (164 aa)) folds into the JmjC domain. Residues His1390, Glu1392, and His1470 each coordinate Fe cation. Positions 1575, 1578, 1602, and 1605 each coordinate Zn(2+).

Belongs to the UTX family. In terms of assembly, interacts with TLE1. Component of the MLL4 complex, at least composed of KMT2B/MLL4, ASH2L, RBBP5, WDR5, and KDM6B. Interacts with TBX21, SMARCA4, SMARCC1 and SMARCC2. L-ascorbate is required as a cofactor. The cofactor is Fe(2+).

Its subcellular location is the nucleus. The enzyme catalyses N(6),N(6),N(6)-trimethyl-L-lysyl(27)-[histone H3] + 2 2-oxoglutarate + 2 O2 = N(6)-methyl-L-lysyl(27)-[histone H3] + 2 formaldehyde + 2 succinate + 2 CO2. Its function is as follows. Histone demethylase that specifically demethylates 'Lys-27' of histone H3, thereby playing a central role in histone code. Demethylates trimethylated and dimethylated H3 'Lys-27'. Plays a central role in regulation of posterior development, by regulating HOX gene expression. Involved in inflammatory response by participating in macrophage differentiation in case of inflammation by regulating gene expression and macrophage differentiation. Plays a demethylase-independent role in chromatin remodeling to regulate T-box family member-dependent gene expression by acting as a link between T-box factors and the SMARCA4-containing SWI/SNF remodeling complex. This is Lysine-specific demethylase 6B (KDM6B) from Homo sapiens (Human).